We begin with the raw amino-acid sequence, 137 residues long: Large ribosomal subunit protein uL16 (137 aa).

This sequence belongs to the universal ribosomal protein uL16 family. Part of the 50S ribosomal subunit.

Its function is as follows. Binds 23S rRNA and is also seen to make contacts with the A and possibly P site tRNAs. The sequence is that of Large ribosomal subunit protein uL16 from Pseudomonas putida (strain ATCC 47054 / DSM 6125 / CFBP 8728 / NCIMB 11950 / KT2440).